The chain runs to 72 residues: Conorfamide-Tx2 (72 aa).

Positions 1–19 are cleaved as a signal peptide; it reads MSGRGFLLLALLLLVTVEA. Residues 20–25 constitute a propeptide that is removed on maturation; it reads TRVEKK. The interval 32 to 39 is positively charged region crucial for activity against MRGPRX1 receptors; the sequence is AWSGPRNR. Ile-43 is subject to Isoleucine amide. The propeptide occupies 44 to 72; it reads GRRDMQSPLLSERLRFRALGFRQPSSQKQ.

This sequence belongs to the FARP (FMRFamide related peptide) family. In terms of tissue distribution, expressed by the venom duct.

The protein resides in the secreted. In terms of biological role, this peptide activates human sensory neuron-specific G-protein coupled receptors MRGPRX1, but not mouse receptors (EC(50)=0.54 uM). Compared with the agonist chloroquine (anti-malaria drug), it is 600-fold more potent. In vivo, induces itch sensation, since intradermal cheek injection into humanized transgenic mouse (mouse MRGPRX1 replaced by human MRGPRX1) induces scratching. In vivo, treatment of zebrafish larvae with high doses (10 uM) induces hypoactivity at the beginning of the experiment during the dark phase and hyperactivity in the strobe phase after one hour, even after the removal of the toxin from the solution. The polypeptide is Conorfamide-Tx2 (Conus textile (Cloth-of-gold cone)).